Here is a 292-residue protein sequence, read N- to C-terminus: MKTKIRKAVIPAAGLGVRLLPATKAIPKEMLPLVNKPTIQYIVEEAVKSGIEQILVIVSSKKTAILDHFDYDLILENALIQKNKLQEHKEIEDIANLAHIFFVRQKNQDGLGDAILFAESFVGNEDFAVLLGDDVVFSKEPALKQCLEAYYETNCQTIGVQEVDPCHVDKYGIITPEGDYKNKDLIKVLAMTEKPKPKDAKSNLAILGRYVLKPSIFKALRSVPYGVGGELQLTDGLNFCLKNENFYARKFTGTRFDVGTKSGFIKANLFTALNNKDISKKEVLELLNLVKA.

Belongs to the UDPGP type 2 family.

It catalyses the reaction alpha-D-glucose 1-phosphate + UTP + H(+) = UDP-alpha-D-glucose + diphosphate. Functionally, may play a role in stationary phase survival. The chain is UTP--glucose-1-phosphate uridylyltransferase (galU) from Mycoplasma genitalium (strain ATCC 33530 / DSM 19775 / NCTC 10195 / G37) (Mycoplasmoides genitalium).